The sequence spans 307 residues: D-alanine--D-alanine ligase (307 aa).

The 194-residue stretch at 108-301 (KEVFAAAGLP…FPEFCAWLVE (194 aa)) folds into the ATP-grasp domain. 135-185 (LPPPYVVKPNAEGSSVGVYIVHEDANGPPQLAADMPQDLMVETYVPGRELT) lines the ATP pocket. Residues Asp252, Glu268, and Asn270 each coordinate Mg(2+).

Belongs to the D-alanine--D-alanine ligase family. Requires Mg(2+) as cofactor. The cofactor is Mn(2+).

It localises to the cytoplasm. The enzyme catalyses 2 D-alanine + ATP = D-alanyl-D-alanine + ADP + phosphate + H(+). The protein operates within cell wall biogenesis; peptidoglycan biosynthesis. In terms of biological role, cell wall formation. This chain is D-alanine--D-alanine ligase, found in Cereibacter sphaeroides (strain ATCC 17029 / ATH 2.4.9) (Rhodobacter sphaeroides).